Reading from the N-terminus, the 514-residue chain is Alpha-amylase (514 aa).

A signal peptide spans 1–31 (MIQKRKRTVSFRLVLMCTLLFVSLPITKTSA). Ca(2+) contacts are provided by asparagine 133, aspartate 190, alanine 212, aspartate 214, aspartate 225, aspartate 231, aspartate 233, and aspartate 235. Na(+) is bound at residue aspartate 190. Aspartate 214, aspartate 225, and aspartate 231 together coordinate Na(+). The Nucleophile role is filled by aspartate 262. Histidine 266 serves as a coordination point for Ca(2+). Glutamate 292 serves as the catalytic Proton donor. Residues glycine 331, aspartate 438, and aspartate 461 each coordinate Ca(2+).

The protein belongs to the glycosyl hydrolase 13 family. Monomer. Ca(2+) is required as a cofactor. Na(+) serves as cofactor.

It is found in the secreted. It catalyses the reaction Endohydrolysis of (1-&gt;4)-alpha-D-glucosidic linkages in polysaccharides containing three or more (1-&gt;4)-alpha-linked D-glucose units.. The protein is Alpha-amylase of Bacillus amyloliquefaciens (Bacillus velezensis).